The chain runs to 473 residues: Ribulose bisphosphate carboxylase large chain (473 aa).

Substrate-binding residues include N116 and T166. The active-site Proton acceptor is K168. A substrate-binding site is contributed by K170. K194, D196, and E197 together coordinate Mg(2+). K194 is subject to N6-carboxylysine. The active-site Proton acceptor is the H287. Positions 288, 320, and 372 each coordinate substrate.

It belongs to the RuBisCO large chain family. Type I subfamily. As to quaternary structure, heterohexadecamer of 8 large chains and 8 small chains. The cofactor is Mg(2+).

It carries out the reaction 2 (2R)-3-phosphoglycerate + 2 H(+) = D-ribulose 1,5-bisphosphate + CO2 + H2O. It catalyses the reaction D-ribulose 1,5-bisphosphate + O2 = 2-phosphoglycolate + (2R)-3-phosphoglycerate + 2 H(+). In terms of biological role, ruBisCO catalyzes two reactions: the carboxylation of D-ribulose 1,5-bisphosphate, the primary event in carbon dioxide fixation, as well as the oxidative fragmentation of the pentose substrate. Both reactions occur simultaneously and in competition at the same active site. The chain is Ribulose bisphosphate carboxylase large chain from Alkalilimnicola ehrlichii (strain ATCC BAA-1101 / DSM 17681 / MLHE-1).